The primary structure comprises 543 residues: CTP synthase (543 aa).

The amidoligase domain stretch occupies residues 1 to 265 (MTRYIFVTGG…DDFVVERFGL (265 aa)). Ser13 is a CTP binding site. Residue Ser13 coordinates UTP. ATP contacts are provided by residues 14–19 (SLGKGI) and Asp71. Residues Asp71 and Glu139 each coordinate Mg(2+). CTP is bound by residues 146-148 (DIE), 186-191 (KTKPTQ), and Lys222. Residues 186–191 (KTKPTQ) and Lys222 each bind UTP. Positions 290–541 (TIAMVGKYME…VKAALAQHQK (252 aa)) constitute a Glutamine amidotransferase type-1 domain. Position 351 (Gly351) interacts with L-glutamine. Cys378 (nucleophile; for glutamine hydrolysis) is an active-site residue. L-glutamine-binding positions include 379 to 382 (LGMQ), Glu402, and Arg469. Active-site residues include His514 and Glu516.

This sequence belongs to the CTP synthase family. As to quaternary structure, homotetramer.

The catalysed reaction is UTP + L-glutamine + ATP + H2O = CTP + L-glutamate + ADP + phosphate + 2 H(+). It carries out the reaction L-glutamine + H2O = L-glutamate + NH4(+). It catalyses the reaction UTP + NH4(+) + ATP = CTP + ADP + phosphate + 2 H(+). Its pathway is pyrimidine metabolism; CTP biosynthesis via de novo pathway; CTP from UDP: step 2/2. Its activity is regulated as follows. Allosterically activated by GTP, when glutamine is the substrate; GTP has no effect on the reaction when ammonia is the substrate. The allosteric effector GTP functions by stabilizing the protein conformation that binds the tetrahedral intermediate(s) formed during glutamine hydrolysis. Inhibited by the product CTP, via allosteric rather than competitive inhibition. In terms of biological role, catalyzes the ATP-dependent amination of UTP to CTP with either L-glutamine or ammonia as the source of nitrogen. Regulates intracellular CTP levels through interactions with the four ribonucleotide triphosphates. In Pseudomonas savastanoi pv. phaseolicola (strain 1448A / Race 6) (Pseudomonas syringae pv. phaseolicola (strain 1448A / Race 6)), this protein is CTP synthase.